Reading from the N-terminus, the 287-residue chain is ATP synthase gamma chain (287 aa).

This sequence belongs to the ATPase gamma chain family. In terms of assembly, F-type ATPases have 2 components, CF(1) - the catalytic core - and CF(0) - the membrane proton channel. CF(1) has five subunits: alpha(3), beta(3), gamma(1), delta(1), epsilon(1). CF(0) has three main subunits: a, b and c.

The protein resides in the cell inner membrane. Produces ATP from ADP in the presence of a proton gradient across the membrane. The gamma chain is believed to be important in regulating ATPase activity and the flow of protons through the CF(0) complex. The protein is ATP synthase gamma chain of Serratia proteamaculans (strain 568).